Consider the following 400-residue polypeptide: Elongation factor Tu (400 aa).

Residues 10–210 form the tr-type G domain; sequence KPHINVGTIG…ALDEYIPEPK (201 aa). Positions 19 to 26 are G1; sequence GHVDHGKT. 19–26 lines the GTP pocket; it reads GHVDHGKT. Residue T26 participates in Mg(2+) binding. The G2 stretch occupies residues 64–68; the sequence is GITIA. Residues 85–88 form a G3 region; it reads DCPG. Residues 85–89 and 140–143 each bind GTP; these read DCPGH and NKAD. Residues 140–143 are G4; that stretch reads NKAD. Residues 178–180 form a G5 region; that stretch reads SAL.

It belongs to the TRAFAC class translation factor GTPase superfamily. Classic translation factor GTPase family. EF-Tu/EF-1A subfamily. In terms of assembly, monomer.

It localises to the cytoplasm. The catalysed reaction is GTP + H2O = GDP + phosphate + H(+). Its function is as follows. GTP hydrolase that promotes the GTP-dependent binding of aminoacyl-tRNA to the A-site of ribosomes during protein biosynthesis. This chain is Elongation factor Tu, found in Rubrobacter xylanophilus (strain DSM 9941 / JCM 11954 / NBRC 16129 / PRD-1).